We begin with the raw amino-acid sequence, 385 residues long: Meiotic recombination protein SPO11-2 (385 aa).

The Topo IIA-type catalytic domain occupies 24-169; it reads LPPAEVRARI…LGIMASSRGA (146 aa). Residue Tyr-126 is the O-(5'-phospho-DNA)-tyrosine intermediate of the active site. 2 residues coordinate Mg(2+): Glu-219 and Asp-272.

The protein belongs to the TOP6A family. Interacts with TOP6B. Mg(2+) serves as cofactor. Highly expressed in flowers before pollination. Expressed in roots and shoots.

It localises to the nucleus. The catalysed reaction is ATP-dependent breakage, passage and rejoining of double-stranded DNA.. Required for meiotic recombination. Mediates DNA cleavage that forms the double-strand breaks (DSB) that initiate meiotic recombination. In Oryza sativa subsp. indica (Rice), this protein is Meiotic recombination protein SPO11-2 (SPO11-2).